The primary structure comprises 673 residues: Inactive polyglycylase TTLL10 (673 aa).

The disordered stretch occupies residues methionine 1–glycine 132. Residues phenylalanine 8–alanine 36 show a composition bias toward basic residues. Over residues alanine 52–glycine 62 the composition is skewed to pro residues. A compositionally biased stretch (basic and acidic residues) spans proline 89–glutamate 105. A TTL domain is found at proline 155–lysine 552. ATP contacts are provided by residues glutamine 362 to isoleucine 365, lysine 375, and aspartate 377. Residues glutamate 569–proline 673 form a disordered region. The span at proline 612–proline 627 shows a compositional bias: pro residues. Residues alanine 661–proline 673 are compositionally biased toward basic and acidic residues.

In terms of biological role, inactive polyglycylase. The sequence is that of Inactive polyglycylase TTLL10 from Homo sapiens (Human).